The following is a 135-amino-acid chain: Fluoride-specific ion channel FluC (135 aa).

Transmembrane regions (helical) follow at residues 7-27 (IAAI…LGLA), 37-57 (IGTL…IAYV), 70-90 (FMIT…AELF), and 105-125 (LGLH…TIGL). Na(+)-binding residues include G77 and S80.

Belongs to the fluoride channel Fluc/FEX (TC 1.A.43) family.

The protein resides in the cell inner membrane. The enzyme catalyses fluoride(in) = fluoride(out). Its activity is regulated as follows. Na(+) is not transported, but it plays an essential structural role and its presence is essential for fluoride channel function. In terms of biological role, fluoride-specific ion channel. Important for reducing fluoride concentration in the cell, thus reducing its toxicity. This is Fluoride-specific ion channel FluC from Xanthomonas oryzae pv. oryzae (strain MAFF 311018).